The primary structure comprises 299 residues: Tetrahydromethanopterin S-methyltransferase subunit E (299 aa).

6 helical membrane-spanning segments follow: residues 57–77 (AISGEPVSYGLYVAVAGSVAW), 80–100 (INAGLNAVLALIIGSGVAAIV), 133–153 (IGPIVGHGFIAVFTMVLAAYL), 158–178 (LGNPFPLPLVALIFGITVGAI), 237–257 (GLCFGLIIFLDGWRSIVGNII), and 261–281 (LVTKTSIALVVGLLVVVAAMI).

This sequence belongs to the MtrE family. The complex is composed of 8 subunits; MtrA, MtrB, MtrC, MtrD, MtrE, MtrF, MtrG and MtrH.

The protein resides in the cell membrane. The catalysed reaction is 5-methyl-5,6,7,8-tetrahydromethanopterin + coenzyme M + 2 Na(+)(in) = 5,6,7,8-tetrahydromethanopterin + methyl-coenzyme M + 2 Na(+)(out). It functions in the pathway one-carbon metabolism; methanogenesis from CO(2); methyl-coenzyme M from 5,10-methylene-5,6,7,8-tetrahydromethanopterin: step 2/2. Its function is as follows. Part of a complex that catalyzes the formation of methyl-coenzyme M and tetrahydromethanopterin from coenzyme M and methyl-tetrahydromethanopterin. This is an energy-conserving, sodium-ion translocating step. This Methanococcus vannielii (strain ATCC 35089 / DSM 1224 / JCM 13029 / OCM 148 / SB) protein is Tetrahydromethanopterin S-methyltransferase subunit E.